A 585-amino-acid polypeptide reads, in one-letter code: Amyloid protein-binding protein 2 (585 aa).

8 TPR repeats span residues 50–83 (QGRL…HHCF), 120–153 (IQVG…CTLH), 206–239 (AALY…ITSG), 288–321 (SDTL…RQSV), 333–367 (HEDL…ITHI), 429–462 (AKHY…KEQL), 471–505 (ALSV…GKKL), and 514–547 (EYDY…NRLR).

As to quaternary structure, component of a CRL2 E3 ubiquitin-protein ligase complex, also named ECS (Elongin BC-CUL2/5-SOCS-box protein) complex, composed of CUL2, Elongin BC (ELOB and ELOC), RBX1 and substrate-specific adapter APPBP2. Interacts with APP; APP interaction inhibits the E3 ubiquitin-protein ligase activity of the CRL2(APPBP2) complex. Post-translationally, rapidly degraded by the proteasome upon overexpression of a C-terminal fragment of APP.

Its subcellular location is the nucleus. The protein localises to the cytoplasm. The protein resides in the cytoskeleton. It is found in the membrane. It participates in protein modification; protein ubiquitination. E3 ubiquitin-protein ligase activity of the CRL2(APPBP2) complex is inhibited by APP. Functionally, substrate-recognition component of a Cul2-RING (CRL2) E3 ubiquitin-protein ligase complex of the DesCEND (destruction via C-end degrons) pathway, which recognizes a C-degron located at the extreme C terminus of target proteins, leading to their ubiquitination and degradation. The C-degron recognized by the DesCEND pathway is usually a motif of less than ten residues and can be present in full-length proteins, truncated proteins or proteolytically cleaved forms. The CRL2(APPBP2) complex specifically recognizes proteins with a -Arg-Xaa-Xaa-Gly degron at the C-terminus, leading to their ubiquitination and degradation. The CRL2(APPBP2) complex mediates ubiquitination and degradation of truncated SELENOV selenoproteins produced by failed UGA/Sec decoding, which end with a -Arg-Xaa-Xaa-Gly degron. May play a role in intracellular protein transport: may be involved in the translocation of APP along microtubules toward the cell surface. The polypeptide is Amyloid protein-binding protein 2 (Rattus norvegicus (Rat)).